Here is a 303-residue protein sequence, read N- to C-terminus: sn-1-specific diacylglycerol lipase ABHD11 (303 aa).

The transit peptide at Met1 to Phe22 directs the protein to the mitochondrion. Residues Pro55–Arg290 form the AB hydrolase-1 domain. Position 75 is an N6-succinyllysine (Lys75). Residues Ser129, Asp225, and His284 each act as charge relay system in the active site.

This sequence belongs to the AB hydrolase superfamily. As to quaternary structure, interacts with OGDH and DLST; this interaction maintains the functional lipoylation of the 2-oxoglutarate dehydrogenase complex. In terms of processing, phosphorylated.

The protein resides in the mitochondrion. The protein localises to the mitochondrion matrix. It catalyses the reaction a 1,3-diacyl-sn-glycerol + H2O = a 1-acyl-sn-glycerol + a fatty acid + H(+). The catalysed reaction is 1-octadecanoyl-2-(9Z-octadecenoyl)-sn-glycerol + H2O = 2-(9Z-octadecenoyl)-glycerol + octadecanoate + H(+). The enzyme catalyses 1-octadecanoyl-2-(4Z,7Z,10Z,13Z,16Z,19Z-docosahexaenoyl)-sn-glycerol + H2O = 2-(4Z,7Z,10Z,13Z,16Z,19Z-docosahexaenoyl)-glycerol + octadecanoate + H(+). It carries out the reaction a 1,2-diacyl-sn-glycerol + H2O = a 2-acylglycerol + a fatty acid + H(+). It catalyses the reaction 1,2-didecanoylglycerol + H2O = decanoylglycerol + decanoate + H(+). The catalysed reaction is 1-octadecanoyl-2-(5Z,8Z,11Z,14Z-eicosatetraenoyl)-sn-glycerol + H2O = 2-(5Z,8Z,11Z,14Z-eicosatetraenoyl)-glycerol + octadecanoate + H(+). Its activity is regulated as follows. The diacylglycerol lipase activity can be modulated by phosphorylation by cAMP-dependent protein kinase. Its function is as follows. Catalyzes the hydrolysis of diacylglycerol in vitro and may function as a key regulator in lipid metabolism, namely by regulating the intracellular levels of diacylglycerol. 1,2-diacyl-sn-glycerols are the preferred substrate over 1,3-diacyl-sn-glycerols. The enzyme hydrolyzes stearate in preference to palmitate from the sn-1 position of 1,2-diacyl-sn-glycerols. Maintains the functional lipoylation of the 2-oxoglutarate dehydrogenase complex (OGDHc) through its interaction with the OGDHc by preventing the formation of lipoyl adducts. In addition, is also required for the expansion and differentiation of embryonic stem cells (ESCs). The chain is sn-1-specific diacylglycerol lipase ABHD11 from Bos taurus (Bovine).